Here is a 463-residue protein sequence, read N- to C-terminus: L-seryl-tRNA(Sec) selenium transferase (463 aa).

At Lys-295 the chain carries N6-(pyridoxal phosphate)lysine.

Belongs to the SelA family. Homodecamer; pentamer of dimers. Binds only one seryl-tRNA(Sec) per dimer. It depends on pyridoxal 5'-phosphate as a cofactor.

It localises to the cytoplasm. It carries out the reaction L-seryl-tRNA(Sec) + selenophosphate + H(+) = L-selenocysteinyl-tRNA(Sec) + phosphate. It functions in the pathway aminoacyl-tRNA biosynthesis; selenocysteinyl-tRNA(Sec) biosynthesis; selenocysteinyl-tRNA(Sec) from L-seryl-tRNA(Sec) (bacterial route): step 1/1. Functionally, converts seryl-tRNA(Sec) to selenocysteinyl-tRNA(Sec) required for selenoprotein biosynthesis. The chain is L-seryl-tRNA(Sec) selenium transferase from Salmonella dublin (strain CT_02021853).